Here is a 454-residue protein sequence, read N- to C-terminus: tRNA modification GTPase MnmE (454 aa).

Residues arginine 23, glutamate 80, and lysine 120 each contribute to the (6S)-5-formyl-5,6,7,8-tetrahydrofolate site. Residues 216–377 enclose the TrmE-type G domain; that stretch reads GMRVVIAGRP…VREHLKACIG (162 aa). Asparagine 226 provides a ligand contact to K(+). GTP contacts are provided by residues 226–231, 245–251, 270–273, and 335–338; these read NAGKSS, TEIAGTT, DTAG, and NKAD. Serine 230 is a binding site for Mg(2+). Threonine 245, isoleucine 247, and threonine 250 together coordinate K(+). Threonine 251 contributes to the Mg(2+) binding site. A (6S)-5-formyl-5,6,7,8-tetrahydrofolate-binding site is contributed by lysine 454.

Belongs to the TRAFAC class TrmE-Era-EngA-EngB-Septin-like GTPase superfamily. TrmE GTPase family. As to quaternary structure, homodimer. Heterotetramer of two MnmE and two MnmG subunits. It depends on K(+) as a cofactor.

The protein resides in the cytoplasm. Exhibits a very high intrinsic GTPase hydrolysis rate. Involved in the addition of a carboxymethylaminomethyl (cmnm) group at the wobble position (U34) of certain tRNAs, forming tRNA-cmnm(5)s(2)U34. This chain is tRNA modification GTPase MnmE, found in Pseudoalteromonas translucida (strain TAC 125).